Consider the following 96-residue polypeptide: MIKVTKDLVLHLENLARLELSEDQRESLMKDFQEILDYVELLNEVDVEGVEPMYTPVEDSAKLRKGDPRFFEMRDLIKKNFPEEKDGHIKVPGIHR.

This sequence belongs to the GatC family. In terms of assembly, heterotrimer of A, B and C subunits.

It carries out the reaction L-glutamyl-tRNA(Gln) + L-glutamine + ATP + H2O = L-glutaminyl-tRNA(Gln) + L-glutamate + ADP + phosphate + H(+). It catalyses the reaction L-aspartyl-tRNA(Asn) + L-glutamine + ATP + H2O = L-asparaginyl-tRNA(Asn) + L-glutamate + ADP + phosphate + 2 H(+). Its function is as follows. Allows the formation of correctly charged Asn-tRNA(Asn) or Gln-tRNA(Gln) through the transamidation of misacylated Asp-tRNA(Asn) or Glu-tRNA(Gln) in organisms which lack either or both of asparaginyl-tRNA or glutaminyl-tRNA synthetases. The reaction takes place in the presence of glutamine and ATP through an activated phospho-Asp-tRNA(Asn) or phospho-Glu-tRNA(Gln). The sequence is that of Glutamyl-tRNA(Gln) amidotransferase subunit C (gatC) from Thermotoga maritima (strain ATCC 43589 / DSM 3109 / JCM 10099 / NBRC 100826 / MSB8).